The primary structure comprises 94 residues: Aspartyl/glutamyl-tRNA(Asn/Gln) amidotransferase subunit C (94 aa).

This sequence belongs to the GatC family. As to quaternary structure, heterotrimer of A, B and C subunits.

The enzyme catalyses L-glutamyl-tRNA(Gln) + L-glutamine + ATP + H2O = L-glutaminyl-tRNA(Gln) + L-glutamate + ADP + phosphate + H(+). It carries out the reaction L-aspartyl-tRNA(Asn) + L-glutamine + ATP + H2O = L-asparaginyl-tRNA(Asn) + L-glutamate + ADP + phosphate + 2 H(+). Functionally, allows the formation of correctly charged Asn-tRNA(Asn) or Gln-tRNA(Gln) through the transamidation of misacylated Asp-tRNA(Asn) or Glu-tRNA(Gln) in organisms which lack either or both of asparaginyl-tRNA or glutaminyl-tRNA synthetases. The reaction takes place in the presence of glutamine and ATP through an activated phospho-Asp-tRNA(Asn) or phospho-Glu-tRNA(Gln). The sequence is that of Aspartyl/glutamyl-tRNA(Asn/Gln) amidotransferase subunit C from Nitratidesulfovibrio vulgaris (strain ATCC 29579 / DSM 644 / CCUG 34227 / NCIMB 8303 / VKM B-1760 / Hildenborough) (Desulfovibrio vulgaris).